The primary structure comprises 430 residues: Adenylosuccinate synthetase (430 aa).

GTP contacts are provided by residues 12–18 (GDEGKGK) and 40–42 (GHT). The active-site Proton acceptor is D13. Mg(2+) contacts are provided by D13 and G40. IMP is bound by residues 13–16 (DEGK), 38–41 (NAGH), T128, R142, Q223, T238, and R302. H41 (proton donor) is an active-site residue. 298-304 (TTTGRPR) is a substrate binding site. GTP-binding positions include R304, 330–332 (CID), and 412–414 (SVG).

The protein belongs to the adenylosuccinate synthetase family. Homodimer. Mg(2+) is required as a cofactor.

The protein localises to the cytoplasm. The enzyme catalyses IMP + L-aspartate + GTP = N(6)-(1,2-dicarboxyethyl)-AMP + GDP + phosphate + 2 H(+). Its pathway is purine metabolism; AMP biosynthesis via de novo pathway; AMP from IMP: step 1/2. Functionally, plays an important role in the de novo pathway of purine nucleotide biosynthesis. Catalyzes the first committed step in the biosynthesis of AMP from IMP. The polypeptide is Adenylosuccinate synthetase (Streptococcus thermophilus (strain CNRZ 1066)).